The following is a 188-amino-acid chain: Photosystem I assembly protein Ycf4 (188 aa).

Helical transmembrane passes span 26–48 (FFWA…SSYF) and 63–85 (FIPQ…GYLW).

The protein belongs to the Ycf4 family.

It localises to the cellular thylakoid membrane. Functionally, seems to be required for the assembly of the photosystem I complex. This is Photosystem I assembly protein Ycf4 from Synechocystis sp. (strain ATCC 27184 / PCC 6803 / Kazusa).